The chain runs to 340 residues: ATP-dependent 6-phosphofructokinase (340 aa).

G11 is an ATP binding site. 21–25 (RAVVR) is an ADP binding site. Residues 72-73 (RY) and 102-105 (GDGS) each bind ATP. Residue D103 participates in Mg(2+) binding. 125 to 127 (TID) lines the substrate pocket. The active-site Proton acceptor is the D127. An ADP-binding site is contributed by R154. Substrate contacts are provided by residues R162 and 169–171 (MGR). ADP contacts are provided by residues 185–187 (GAD) and 213–215 (KHH). Substrate contacts are provided by residues E222, R244, and 250-253 (HLLR).

This sequence belongs to the phosphofructokinase type A (PFKA) family. ATP-dependent PFK group I subfamily. Prokaryotic clade 'B1' sub-subfamily. As to quaternary structure, homotetramer. Mg(2+) serves as cofactor.

It is found in the cytoplasm. It carries out the reaction beta-D-fructose 6-phosphate + ATP = beta-D-fructose 1,6-bisphosphate + ADP + H(+). It functions in the pathway carbohydrate degradation; glycolysis; D-glyceraldehyde 3-phosphate and glycerone phosphate from D-glucose: step 3/4. Its activity is regulated as follows. Allosterically activated by ADP and other diphosphonucleosides, and allosterically inhibited by phosphoenolpyruvate. In terms of biological role, catalyzes the phosphorylation of D-fructose 6-phosphate to fructose 1,6-bisphosphate by ATP, the first committing step of glycolysis. This Streptococcus agalactiae serotype Ia (strain ATCC 27591 / A909 / CDC SS700) protein is ATP-dependent 6-phosphofructokinase.